The following is a 291-amino-acid chain: Bifunctional protein FolD (291 aa).

NADP(+) is bound by residues 168–170 (GRG), threonine 195, and isoleucine 236.

The protein belongs to the tetrahydrofolate dehydrogenase/cyclohydrolase family. Homodimer.

The catalysed reaction is (6R)-5,10-methylene-5,6,7,8-tetrahydrofolate + NADP(+) = (6R)-5,10-methenyltetrahydrofolate + NADPH. The enzyme catalyses (6R)-5,10-methenyltetrahydrofolate + H2O = (6R)-10-formyltetrahydrofolate + H(+). Its pathway is one-carbon metabolism; tetrahydrofolate interconversion. Catalyzes the oxidation of 5,10-methylenetetrahydrofolate to 5,10-methenyltetrahydrofolate and then the hydrolysis of 5,10-methenyltetrahydrofolate to 10-formyltetrahydrofolate. The protein is Bifunctional protein FolD of Bifidobacterium longum subsp. infantis (strain ATCC 15697 / DSM 20088 / JCM 1222 / NCTC 11817 / S12).